The chain runs to 699 residues: Polyribonucleotide nucleotidyltransferase (699 aa).

Positions 485 and 491 each coordinate Mg(2+). The KH domain occupies 552–611 (PRITTIKINPEKIRDVIGKGGAVIRALTEETGTTIELEDDGTVKIASNNGDATREAIRRI). Residues 621 to 689 (GRLYTGKVIR…RQGRVRLSIK (69 aa)) enclose the S1 motif domain.

It belongs to the polyribonucleotide nucleotidyltransferase family. In terms of assembly, component of the RNA degradosome, which is a multiprotein complex involved in RNA processing and mRNA degradation. The cofactor is Mg(2+).

It localises to the cytoplasm. The enzyme catalyses RNA(n+1) + phosphate = RNA(n) + a ribonucleoside 5'-diphosphate. Involved in mRNA degradation. Catalyzes the phosphorolysis of single-stranded polyribonucleotides processively in the 3'- to 5'-direction. This Shewanella amazonensis (strain ATCC BAA-1098 / SB2B) protein is Polyribonucleotide nucleotidyltransferase.